Reading from the N-terminus, the 386-residue chain is Succinate--CoA ligase [ADP-forming] subunit beta (386 aa).

An ATP-grasp domain is found at 9–244 (KAVLRSYGVS…LDEEDAKEIE (236 aa)). ATP is bound by residues Lys-46, 53-55 (GRG), Glu-99, Cys-102, and Glu-107. 2 residues coordinate Mg(2+): Asn-199 and Asp-213. Substrate-binding positions include Asn-264 and 321-323 (GIM).

This sequence belongs to the succinate/malate CoA ligase beta subunit family. Heterotetramer of two alpha and two beta subunits. Mg(2+) serves as cofactor.

It catalyses the reaction succinate + ATP + CoA = succinyl-CoA + ADP + phosphate. The enzyme catalyses GTP + succinate + CoA = succinyl-CoA + GDP + phosphate. Its pathway is carbohydrate metabolism; tricarboxylic acid cycle; succinate from succinyl-CoA (ligase route): step 1/1. Its function is as follows. Succinyl-CoA synthetase functions in the citric acid cycle (TCA), coupling the hydrolysis of succinyl-CoA to the synthesis of either ATP or GTP and thus represents the only step of substrate-level phosphorylation in the TCA. The beta subunit provides nucleotide specificity of the enzyme and binds the substrate succinate, while the binding sites for coenzyme A and phosphate are found in the alpha subunit. The sequence is that of Succinate--CoA ligase [ADP-forming] subunit beta from Bacillus thuringiensis (strain Al Hakam).